The chain runs to 218 residues: Glutathione S-transferase (218 aa).

In terms of domain architecture, GST N-terminal spans 3 to 88 (SKPVLGYWDI…YIGRKYKLTG (86 aa)). Glutathione is bound by residues 9–10 (YW), 43–46 (RSAW), K50, 59–60 (NL), and 72–73 (QT). Residues 90-206 (NEPEELRVSL…YIKAQQPKLF (117 aa)) form the GST C-terminal domain. Y116 is a binding site for substrate.

It belongs to the GST superfamily. Mu family.

The catalysed reaction is RX + glutathione = an S-substituted glutathione + a halide anion + H(+). Functionally, conjugation of reduced glutathione to a wide number of exogenous and endogenous hydrophobic electrophiles. In Tyrophagus putrescentiae (Mold mite), this protein is Glutathione S-transferase.